We begin with the raw amino-acid sequence, 126 residues long: Fatty acid-binding protein, liver (126 aa).

Ala-2 is subject to N-acetylalanine. Positions 77, 99, and 101 each coordinate cholate.

This sequence belongs to the calycin superfamily. Fatty-acid binding protein (FABP) family.

It localises to the cytoplasm. Binds free fatty acids and their coenzyme A derivatives, bilirubin, and some other small molecules in the cytoplasm. May be involved in intracellular lipid transport. The polypeptide is Fatty acid-binding protein, liver (fabp1) (Aquarana catesbeiana (American bullfrog)).